A 288-amino-acid polypeptide reads, in one-letter code: Thymidylate synthase (288 aa).

DUMP contacts are provided by residues R21 and R150–R151. The active-site Nucleophile is the C170. DUMP-binding positions include R190–D193, N201, and H231–Y233. Position 193 (D193) interacts with (6R)-5,10-methylene-5,6,7,8-tetrahydrofolate. (6R)-5,10-methylene-5,6,7,8-tetrahydrofolate is bound at residue A287.

The protein belongs to the thymidylate synthase family. Bacterial-type ThyA subfamily. Homodimer.

Its subcellular location is the cytoplasm. The catalysed reaction is dUMP + (6R)-5,10-methylene-5,6,7,8-tetrahydrofolate = 7,8-dihydrofolate + dTMP. The protein operates within pyrimidine metabolism; dTTP biosynthesis. Catalyzes the reductive methylation of 2'-deoxyuridine-5'-monophosphate (dUMP) to 2'-deoxythymidine-5'-monophosphate (dTMP) while utilizing 5,10-methylenetetrahydrofolate (mTHF) as the methyl donor and reductant in the reaction, yielding dihydrofolate (DHF) as a by-product. This enzymatic reaction provides an intracellular de novo source of dTMP, an essential precursor for DNA biosynthesis. The protein is Thymidylate synthase of Acholeplasma laidlawii (strain PG-8A).